Here is a 633-residue protein sequence, read N- to C-terminus: DNA repair protein XRCC1 (633 aa).

Ser-140 carries the phosphoserine modification. Lys-176 participates in a covalent cross-link: Glycyl lysine isopeptide (Lys-Gly) (interchain with G-Cter in SUMO1); alternate. Lys-176 is covalently cross-linked (Glycyl lysine isopeptide (Lys-Gly) (interchain with G-Cter in SUMO2); alternate). Thr-198 is modified (phosphothreonine). Phosphoserine is present on Ser-199. A Phosphothreonine modification is found at Thr-202. Phosphoserine occurs at positions 204, 226, and 241. Low complexity predominate over residues 221-231 (AASSASPVSRA). Residues 221 to 313 (AASSASPVSR…TEPRRPRAGP (93 aa)) are disordered. Over residues 240–257 (ESPKGKRKLDLNQEEKKT) the composition is skewed to basic and acidic residues. Residue Thr-257 is modified to Phosphothreonine. A phosphoserine mark is found at Ser-259 and Ser-266. Over residues 277–291 (APTRTPATAPVPARA) the composition is skewed to low complexity. Phosphothreonine is present on Thr-281. A compositionally biased stretch (basic and acidic residues) spans 299 to 313 (PRGEGTEPRRPRAGP). One can recognise a BRCT 1 domain in the interval 315-403 (ELGKILQGVV…RRLPSQRYLM (89 aa)). Residue Ser-371 is modified to Phosphoserine; by PRKDC. 3 disordered regions span residues 400 to 462 (RYLM…AASP), 471 to 490 (EGVQ…DTED), and 498 to 536 (QKEH…DLPV). Residues Ser-408, Ser-409, Ser-410, and Ser-421 each carry the phosphoserine modification. A compositionally biased stretch (low complexity) spans 427 to 443 (KLPQKQPQTKTKPTQAA). 2 positions are modified to phosphoserine: Ser-446 and Ser-447. Thr-453 and Thr-457 each carry phosphothreonine. Ser-461 and Ser-485 each carry phosphoserine. Acidic residues predominate over residues 481 to 490 (GAEDSGDTED). Residue Thr-488 is modified to Phosphothreonine. Residue Ser-518 is modified to Phosphoserine. Phosphothreonine occurs at positions 519 and 523. Residues 538-629 (ELPDFFQGKH…KLLPHQLYGV (92 aa)) form the BRCT 2 domain.

Homodimer. Interacts with polynucleotide kinase (PNK), DNA polymerase-beta (POLB) and DNA ligase III (LIG3). Interacts with APTX and APLF. Interacts with APEX1; the interaction is induced by SIRT1 and increases with the acetylated form of APEX1. Interacts with (poly-ADP-ribosylated) PARP1. In terms of processing, phosphorylation of Ser-371 causes dimer dissociation. Phosphorylation by CK2 promotes interaction with APTX and APLF. Sumoylated. Expressed in fibroblasts, retinal pigmented epithelial cells and lymphoblastoid cells (at protein level).

Its subcellular location is the nucleus. The protein resides in the chromosome. Scaffold protein involved in DNA single-strand break repair by mediating the assembly of DNA break repair protein complexes. Negatively regulates ADP-ribosyltransferase activity of PARP1 during base-excision repair in order to prevent excessive PARP1 activity. Recognizes and binds poly-ADP-ribose chains: specifically binds auto-poly-ADP-ribosylated PARP1, limiting its activity. The polypeptide is DNA repair protein XRCC1 (Homo sapiens (Human)).